Here is a 159-residue protein sequence, read N- to C-terminus: Small ribosomal subunit protein uS15 (159 aa).

Residues 1 to 16 show a composition bias toward basic residues; sequence MNKRKEKGKSHSKRPV. A disordered region spans residues 1-22; it reads MNKRKEKGKSHSKRPVRNTPPR.

It belongs to the universal ribosomal protein uS15 family. In terms of assembly, part of the 30S ribosomal subunit.

This Ignicoccus hospitalis (strain KIN4/I / DSM 18386 / JCM 14125) protein is Small ribosomal subunit protein uS15.